The following is a 54-amino-acid chain: Kazal-type inhibitor-like protein (54 aa).

Positions 1–54 (MKVNCKGYPTKFCFGKPLPHCASDGKTYPNRCRFCNAFVKSHGLITLRYYGKCK) constitute a Kazal-like domain. 3 disulfides stabilise this stretch: C5–C35, C13–C32, and C21–C53.

As to quaternary structure, may form disulfide-linked dimers or trimers (in vitro). Expressed by the venom gland.

It is found in the secreted. Its function is as follows. Partially inhibits trypsin in vitro at slightly acidic pH and concentrations in excess of 0.3 mM. Has no protease inhibitory activity at neutral or basic pH. Has no antibacterial activity. Shows no toxicity in vertebrates apart from transient paw edema in mouse. This chain is Kazal-type inhibitor-like protein, found in Bothriechis schlegelii (Eyelash palm pitviper).